Reading from the N-terminus, the 241-residue chain is Chloride intracellular channel protein 1 (241 aa).

N-acetylalanine is present on A2. Residues A2–P90 form a required for insertion into the membrane region. N6-acetyllysine is present on K13. A G-site motif is present at residues C24–S27. A disulfide bridge links C24 with C59. The chain crosses the membrane as a helical span at residues F26–V46. A GST C-terminal domain is found at Y93–Y233. N6-acetyllysine is present on K119. S121 bears the Phosphoserine mark. An N6-acetyllysine modification is found at K131. Phosphoserine occurs at positions 156 and 211. Y233 carries the post-translational modification Phosphotyrosine.

This sequence belongs to the chloride channel CLIC family. Monomer. Homodimer (in vitro). Interacts with TRAPPC2. Dimerization requires a conformation change that leads to the exposure of a large hydrophobic surface. In vivo, this may lead to membrane insertion.

The protein localises to the nucleus. It is found in the nucleus membrane. Its subcellular location is the cytoplasm. The protein resides in the cell membrane. It localises to the endoplasmic reticulum. It carries out the reaction L-dehydroascorbate + 2 glutathione = glutathione disulfide + L-ascorbate. The enzyme catalyses chloride(in) = chloride(out). It catalyses the reaction iodide(out) = iodide(in). The catalysed reaction is thiocyanate(in) = thiocyanate(out). It carries out the reaction nitrate(in) = nitrate(out). The enzyme catalyses bromide(in) = bromide(out). It catalyses the reaction fluoride(in) = fluoride(out). In the soluble state, catalyzes glutaredoxin-like thiol disulfide exchange reactions with reduced glutathione as electron donor. Reduces selenite and dehydroascorbate and may act as an antioxidant during oxidative stress response. Can insert into membranes and form voltage-dependent multi-ion conductive channels. Membrane insertion seems to be redox-regulated and may occur only under oxidizing conditions. Involved in regulation of the cell cycle. The chain is Chloride intracellular channel protein 1 (CLIC1) from Oryctolagus cuniculus (Rabbit).